The following is a 502-amino-acid chain: Probable cytochrome P450 313b1 (502 aa).

Cys-449 provides a ligand contact to heme.

This sequence belongs to the cytochrome P450 family. Requires heme as cofactor.

Its subcellular location is the endoplasmic reticulum membrane. It is found in the microsome membrane. In terms of biological role, may be involved in the metabolism of insect hormones and in the breakdown of synthetic insecticides. The protein is Probable cytochrome P450 313b1 (Cyp313b1) of Drosophila melanogaster (Fruit fly).